The following is a 234-amino-acid chain: Phosphoribosylaminoimidazole-succinocarboxamide synthase (234 aa).

This sequence belongs to the SAICAR synthetase family.

It catalyses the reaction 5-amino-1-(5-phospho-D-ribosyl)imidazole-4-carboxylate + L-aspartate + ATP = (2S)-2-[5-amino-1-(5-phospho-beta-D-ribosyl)imidazole-4-carboxamido]succinate + ADP + phosphate + 2 H(+). Its pathway is purine metabolism; IMP biosynthesis via de novo pathway; 5-amino-1-(5-phospho-D-ribosyl)imidazole-4-carboxamide from 5-amino-1-(5-phospho-D-ribosyl)imidazole-4-carboxylate: step 1/2. The chain is Phosphoribosylaminoimidazole-succinocarboxamide synthase from Clostridium botulinum (strain Okra / Type B1).